The chain runs to 177 residues: ATP synthase subunit b (177 aa).

A helical membrane pass occupies residues 19–39 (LFPNLPNFIAHVIATIVLVVI).

This sequence belongs to the ATPase B chain family. F-type ATPases have 2 components, F(1) - the catalytic core - and F(0) - the membrane proton channel. F(1) has five subunits: alpha(3), beta(3), gamma(1), delta(1), epsilon(1). F(0) has three main subunits: a(1), b(2) and c(10-14). The alpha and beta chains form an alternating ring which encloses part of the gamma chain. F(1) is attached to F(0) by a central stalk formed by the gamma and epsilon chains, while a peripheral stalk is formed by the delta and b chains.

Its subcellular location is the cell membrane. Functionally, f(1)F(0) ATP synthase produces ATP from ADP in the presence of a proton or sodium gradient. F-type ATPases consist of two structural domains, F(1) containing the extramembraneous catalytic core and F(0) containing the membrane proton channel, linked together by a central stalk and a peripheral stalk. During catalysis, ATP synthesis in the catalytic domain of F(1) is coupled via a rotary mechanism of the central stalk subunits to proton translocation. Component of the F(0) channel, it forms part of the peripheral stalk, linking F(1) to F(0). In Mesoplasma florum (strain ATCC 33453 / NBRC 100688 / NCTC 11704 / L1) (Acholeplasma florum), this protein is ATP synthase subunit b.